Consider the following 98-residue polypeptide: C-X-C motif chemokine 10 (98 aa).

Residues 1-21 (MNQTAILICCLVFLTLSGIQG) form the signal peptide. Citrulline is present on R26. 2 cysteine pairs are disulfide-bonded: C30/C57 and C32/C74.

The protein belongs to the intercrine alpha (chemokine CxC) family.

The protein resides in the secreted. Functionally, chemotactic for monocytes and T-lymphocytes. Binds to CXCR3. This is C-X-C motif chemokine 10 (CXCL10) from Macaca nemestrina (Pig-tailed macaque).